Here is a 323-residue protein sequence, read N- to C-terminus: tRNA U34 carboxymethyltransferase (323 aa).

Carboxy-S-adenosyl-L-methionine is bound by residues K91, W105, K110, G130, 181 to 182 (IE), M196, Y200, and R315.

It belongs to the class I-like SAM-binding methyltransferase superfamily. CmoB family. In terms of assembly, homotetramer.

It carries out the reaction carboxy-S-adenosyl-L-methionine + 5-hydroxyuridine(34) in tRNA = 5-carboxymethoxyuridine(34) in tRNA + S-adenosyl-L-homocysteine + H(+). Its function is as follows. Catalyzes carboxymethyl transfer from carboxy-S-adenosyl-L-methionine (Cx-SAM) to 5-hydroxyuridine (ho5U) to form 5-carboxymethoxyuridine (cmo5U) at position 34 in tRNAs. The protein is tRNA U34 carboxymethyltransferase of Serratia proteamaculans (strain 568).